The chain runs to 374 residues: Probable dual-specificity RNA methyltransferase RlmN (374 aa).

Glutamate 108 functions as the Proton acceptor in the catalytic mechanism. The region spanning 114–361 is the Radical SAM core domain; the sequence is YSDRNTVCIS…SCTVRDTRGR (248 aa). Cysteine 121 and cysteine 367 are oxidised to a cystine. [4Fe-4S] cluster is bound by residues cysteine 128, cysteine 132, and cysteine 135. S-adenosyl-L-methionine is bound by residues 188–189, serine 222, 245–247, and asparagine 324; these read GE and SLH. The active-site S-methylcysteine intermediate is the cysteine 367.

The protein belongs to the radical SAM superfamily. RlmN family. [4Fe-4S] cluster serves as cofactor.

It localises to the cytoplasm. It catalyses the reaction adenosine(2503) in 23S rRNA + 2 reduced [2Fe-2S]-[ferredoxin] + 2 S-adenosyl-L-methionine = 2-methyladenosine(2503) in 23S rRNA + 5'-deoxyadenosine + L-methionine + 2 oxidized [2Fe-2S]-[ferredoxin] + S-adenosyl-L-homocysteine. The enzyme catalyses adenosine(37) in tRNA + 2 reduced [2Fe-2S]-[ferredoxin] + 2 S-adenosyl-L-methionine = 2-methyladenosine(37) in tRNA + 5'-deoxyadenosine + L-methionine + 2 oxidized [2Fe-2S]-[ferredoxin] + S-adenosyl-L-homocysteine. Specifically methylates position 2 of adenine 2503 in 23S rRNA and position 2 of adenine 37 in tRNAs. The chain is Probable dual-specificity RNA methyltransferase RlmN from Mycobacterium sp. (strain JLS).